A 206-amino-acid polypeptide reads, in one-letter code: Purine nucleoside phosphorylase aq_167 (206 aa).

His42, Cys78, and His93 together coordinate Zn(2+).

This sequence belongs to the purine nucleoside phosphorylase YfiH/LACC1 family. In terms of assembly, homodimer. Cu(2+) is required as a cofactor. Zn(2+) serves as cofactor.

The enzyme catalyses adenosine + phosphate = alpha-D-ribose 1-phosphate + adenine. The catalysed reaction is S-methyl-5'-thioadenosine + phosphate = 5-(methylsulfanyl)-alpha-D-ribose 1-phosphate + adenine. It carries out the reaction inosine + phosphate = alpha-D-ribose 1-phosphate + hypoxanthine. It catalyses the reaction adenosine + H2O + H(+) = inosine + NH4(+). Its function is as follows. Purine nucleoside enzyme that catalyzes the phosphorolysis of adenosine and inosine nucleosides, yielding D-ribose 1-phosphate and the respective free bases, adenine and hypoxanthine. Also catalyzes the phosphorolysis of S-methyl-5'-thioadenosine into adenine and S-methyl-5-thio-alpha-D-ribose 1-phosphate. Also has adenosine deaminase activity. In Aquifex aeolicus (strain VF5), this protein is Purine nucleoside phosphorylase aq_167.